Here is a 357-residue protein sequence, read N- to C-terminus: N-methyltransferase dtpB (357 aa).

It belongs to the methyltransferase superfamily.

It participates in alkaloid biosynthesis. Functionally, N-methyltransferase; part of the gene cluster that mediates the biosynthesis of the dimeric diketopiperazine alkaloid ditryptophenaline. The nonribosomal peptide synthase dtpA accepts L-tryptophan and L-phenylalanine as its substrates and forms the phenylalanyl-tryptophanyl cyclic dipeptide product cyclophenylalanyltryptophenyl. The N-methyltransferase dtpB is responsible for the N-methylation of cyclophenylalanyltryptophenyl to yield cyclo-N-methylphenylalanyltryptophenyl. The cytochrome P450 monooxygenase is responsible not only for pyrroloindole ring formation but also for concurrent dimerization of N-methylphenylalanyltryptophanyl diketopiperazine monomers into a homodimeric product. This is N-methyltransferase dtpB from Aspergillus flavus (strain ATCC 200026 / FGSC A1120 / IAM 13836 / NRRL 3357 / JCM 12722 / SRRC 167).